The sequence spans 259 residues: Deoxyribose-phosphate aldolase (259 aa).

The active-site Proton donor/acceptor is the Asp102. Lys167 acts as the Schiff-base intermediate with acetaldehyde in catalysis. Lys201 functions as the Proton donor/acceptor in the catalytic mechanism.

The protein belongs to the DeoC/FbaB aldolase family. DeoC type 2 subfamily.

It is found in the cytoplasm. It carries out the reaction 2-deoxy-D-ribose 5-phosphate = D-glyceraldehyde 3-phosphate + acetaldehyde. The protein operates within carbohydrate degradation; 2-deoxy-D-ribose 1-phosphate degradation; D-glyceraldehyde 3-phosphate and acetaldehyde from 2-deoxy-alpha-D-ribose 1-phosphate: step 2/2. Functionally, catalyzes a reversible aldol reaction between acetaldehyde and D-glyceraldehyde 3-phosphate to generate 2-deoxy-D-ribose 5-phosphate. The sequence is that of Deoxyribose-phosphate aldolase from Salmonella dublin (strain CT_02021853).